We begin with the raw amino-acid sequence, 331 residues long: 6-phosphogluconolactonase (331 aa).

Belongs to the cycloisomerase 2 family.

The enzyme catalyses 6-phospho-D-glucono-1,5-lactone + H2O = 6-phospho-D-gluconate + H(+). The protein operates within carbohydrate degradation; pentose phosphate pathway; D-ribulose 5-phosphate from D-glucose 6-phosphate (oxidative stage): step 2/3. Functionally, catalyzes the hydrolysis of 6-phosphogluconolactone to 6-phosphogluconate. The polypeptide is 6-phosphogluconolactonase (Salmonella arizonae (strain ATCC BAA-731 / CDC346-86 / RSK2980)).